Consider the following 323-residue polypeptide: Leucine-rich repeat-containing protein 46 (323 aa).

LRR repeat units follow at residues 49-70 (DLETVRLDGEGITCIGNLERLR), 71-92 (NIHSLYLQSNKIQRIENLACIT), 93-114 (SLRFLSLAGNQIRHVENLLDLQ), and 115-135 (YLQFLDLSENLIETLKLDELP). Residues 146–188 (NPCTNQDGYRKMVIGALPLLLDLDKQPILERWTSDEEDKSSDE) form the LRRCT domain. Phosphothreonine is present on T178. Phosphoserine is present on residues S179, S185, and S186. Residues 203 to 228 (RGFFKDLEQELHQHQERRQQAALTEH) are a coiled coil. The disordered stretch occupies residues 252–323 (DCSPAVTEEP…TKSTNKRGTK (72 aa)). Residues 269–290 (ATSSTQMASSSKKQVPRNQKGS) show a composition bias toward polar residues. The span at 297-310 (ALAATASKTSLAAA) shows a compositional bias: low complexity. S303 carries the phosphoserine modification.

It is found in the cell projection. Its subcellular location is the cilium. The protein localises to the flagellum. Functionally, required for normal spermatogenesis and male fertility. Plays an important role in sperm flagellum biogenesis. The polypeptide is Leucine-rich repeat-containing protein 46 (Lrrc46) (Rattus norvegicus (Rat)).